A 74-amino-acid polypeptide reads, in one-letter code: Control protein C.MunI (74 aa).

An HTH cro/C1-type domain is found at 12 to 67 (LKKLRKEKTDLSQESFAAQIDLDRTYYSSIENGKRNVSLVNLEKISAGLGITLSEL). A DNA-binding region (H-T-H motif) is located at residues 23–42 (SQESFAAQIDLDRTYYSSIE).

Functionally, probably controls expression of its associated restriction-modification system MunI. The chain is Control protein C.MunI from Mycoplasma sp.